A 423-amino-acid chain; its full sequence is Subtilisin-like protease 2 (423 aa).

Residues 1–17 (MQLLNLGLLLLLPFVAG) form the signal peptide. Positions 18–123 (EIAPQPEPLR…VHPDQHVYLA (106 aa)) are excised as a propeptide. The region spanning 37–123 (QYIVTLKEGL…VHPDQHVYLA (87 aa)) is the Inhibitor I9 domain. One can recognise a Peptidase S8 domain in the interval 132 to 423 (RWGLGYMSSK…RKFTLPKNTK (292 aa)). Catalysis depends on charge relay system residues aspartate 170 and histidine 202. N-linked (GlcNAc...) asparagine glycosylation is found at asparagine 249, asparagine 262, and asparagine 349. Serine 358 (charge relay system) is an active-site residue. Residue asparagine 389 is glycosylated (N-linked (GlcNAc...) asparagine).

The protein belongs to the peptidase S8 family.

It localises to the secreted. In terms of biological role, secreted subtilisin-like serine protease with keratinolytic activity that contributes to pathogenicity. This Arthroderma otae (strain ATCC MYA-4605 / CBS 113480) (Microsporum canis) protein is Subtilisin-like protease 2 (SUB2).